Reading from the N-terminus, the 427-residue chain is Serine--tRNA ligase (427 aa).

L-serine is bound at residue 231–233 (TAE). 262–264 (RSE) contacts ATP. L-serine is bound at residue Glu-285. 349–352 (EISS) provides a ligand contact to ATP. Ser-385 is a binding site for L-serine.

It belongs to the class-II aminoacyl-tRNA synthetase family. Type-1 seryl-tRNA synthetase subfamily. As to quaternary structure, homodimer. The tRNA molecule binds across the dimer.

The protein resides in the cytoplasm. It carries out the reaction tRNA(Ser) + L-serine + ATP = L-seryl-tRNA(Ser) + AMP + diphosphate + H(+). The enzyme catalyses tRNA(Sec) + L-serine + ATP = L-seryl-tRNA(Sec) + AMP + diphosphate + H(+). It participates in aminoacyl-tRNA biosynthesis; selenocysteinyl-tRNA(Sec) biosynthesis; L-seryl-tRNA(Sec) from L-serine and tRNA(Sec): step 1/1. Its function is as follows. Catalyzes the attachment of serine to tRNA(Ser). Is also able to aminoacylate tRNA(Sec) with serine, to form the misacylated tRNA L-seryl-tRNA(Sec), which will be further converted into selenocysteinyl-tRNA(Sec). This chain is Serine--tRNA ligase, found in Sinorhizobium medicae (strain WSM419) (Ensifer medicae).